A 119-amino-acid polypeptide reads, in one-letter code: MKRIAFVFSTAPHGTTAGREGLDALLATSALTDDLAVFFIADGVFQLLPGQKPDAVLARDYIATFKLLGLYDIEQCWICAASLRERGLDPQTPFVVEATPLEADALRRELANCDVILRF.

Belongs to the DsrF/TusC family. As to quaternary structure, heterohexamer, formed by a dimer of trimers. The hexameric TusBCD complex contains 2 copies each of TusB, TusC and TusD. The TusBCD complex interacts with TusE.

It localises to the cytoplasm. Part of a sulfur-relay system required for 2-thiolation of 5-methylaminomethyl-2-thiouridine (mnm(5)s(2)U) at tRNA wobble positions. This Escherichia coli O127:H6 (strain E2348/69 / EPEC) protein is Protein TusC.